A 357-amino-acid polypeptide reads, in one-letter code: Peptide chain release factor 1 (357 aa).

At Gln233 the chain carries N5-methylglutamine.

This sequence belongs to the prokaryotic/mitochondrial release factor family. Post-translationally, methylated by PrmC. Methylation increases the termination efficiency of RF1.

The protein resides in the cytoplasm. Its function is as follows. Peptide chain release factor 1 directs the termination of translation in response to the peptide chain termination codons UAG and UAA. The polypeptide is Peptide chain release factor 1 (Enterococcus faecalis (strain ATCC 700802 / V583)).